A 242-amino-acid polypeptide reads, in one-letter code: uncharacterized protein (242 aa).

The 61-residue stretch at 2 to 62 (EKAYKILSVQ…VEKPSVIFED (61 aa)) folds into the S4 RNA-binding domain. Asp93 is an active-site residue.

The protein belongs to the pseudouridine synthase RluA family.

The catalysed reaction is a uridine in RNA = a pseudouridine in RNA. This is an uncharacterized protein from Helicobacter pylori (strain ATCC 700392 / 26695) (Campylobacter pylori).